A 228-amino-acid polypeptide reads, in one-letter code: 2-C-methyl-D-erythritol 4-phosphate cytidylyltransferase (228 aa).

Belongs to the IspD/TarI cytidylyltransferase family. IspD subfamily.

The enzyme catalyses 2-C-methyl-D-erythritol 4-phosphate + CTP + H(+) = 4-CDP-2-C-methyl-D-erythritol + diphosphate. Its pathway is isoprenoid biosynthesis; isopentenyl diphosphate biosynthesis via DXP pathway; isopentenyl diphosphate from 1-deoxy-D-xylulose 5-phosphate: step 2/6. Functionally, catalyzes the formation of 4-diphosphocytidyl-2-C-methyl-D-erythritol from CTP and 2-C-methyl-D-erythritol 4-phosphate (MEP). This Crocosphaera subtropica (strain ATCC 51142 / BH68) (Cyanothece sp. (strain ATCC 51142)) protein is 2-C-methyl-D-erythritol 4-phosphate cytidylyltransferase.